Consider the following 44-residue polypeptide: Photosystem I reaction center subunit IX (44 aa).

The helical transmembrane segment at 7-27 (YLSVAPVLSTLSLGFLTGFLI) threads the bilayer.

This sequence belongs to the PsaJ family.

The protein resides in the plastid membrane. Functionally, may help in the organization of the PsaE and PsaF subunits. In Cuscuta gronovii (Common dodder), this protein is Photosystem I reaction center subunit IX.